We begin with the raw amino-acid sequence, 247 residues long: Triosephosphate isomerase (247 aa).

9–11 contacts substrate; sequence NWK. Catalysis depends on histidine 94, which acts as the Electrophile. Glutamate 165 functions as the Proton acceptor in the catalytic mechanism. Substrate-binding positions include glycine 171, serine 209, and 230–231; that span reads GG.

The protein belongs to the triosephosphate isomerase family. In terms of assembly, homodimer.

The protein localises to the cytoplasm. It catalyses the reaction D-glyceraldehyde 3-phosphate = dihydroxyacetone phosphate. Its pathway is carbohydrate biosynthesis; gluconeogenesis. It functions in the pathway carbohydrate degradation; glycolysis; D-glyceraldehyde 3-phosphate from glycerone phosphate: step 1/1. Its function is as follows. Involved in the gluconeogenesis. Catalyzes stereospecifically the conversion of dihydroxyacetone phosphate (DHAP) to D-glyceraldehyde-3-phosphate (G3P). In Albidiferax ferrireducens (strain ATCC BAA-621 / DSM 15236 / T118) (Rhodoferax ferrireducens), this protein is Triosephosphate isomerase.